The following is a 254-amino-acid chain: Thiazole synthase (254 aa).

Lysine 95 serves as the catalytic Schiff-base intermediate with DXP. 1-deoxy-D-xylulose 5-phosphate-binding positions include glycine 156, 182–183 (AG), and 204–205 (NT).

The protein belongs to the ThiG family. In terms of assembly, homotetramer. Forms heterodimers with either ThiH or ThiS.

It is found in the cytoplasm. The catalysed reaction is [ThiS sulfur-carrier protein]-C-terminal-Gly-aminoethanethioate + 2-iminoacetate + 1-deoxy-D-xylulose 5-phosphate = [ThiS sulfur-carrier protein]-C-terminal Gly-Gly + 2-[(2R,5Z)-2-carboxy-4-methylthiazol-5(2H)-ylidene]ethyl phosphate + 2 H2O + H(+). The protein operates within cofactor biosynthesis; thiamine diphosphate biosynthesis. In terms of biological role, catalyzes the rearrangement of 1-deoxy-D-xylulose 5-phosphate (DXP) to produce the thiazole phosphate moiety of thiamine. Sulfur is provided by the thiocarboxylate moiety of the carrier protein ThiS. In vitro, sulfur can be provided by H(2)S. This Shewanella baltica (strain OS195) protein is Thiazole synthase.